The chain runs to 84 residues: Small ribosomal subunit protein bS20 (84 aa).

Belongs to the bacterial ribosomal protein bS20 family.

Functionally, binds directly to 16S ribosomal RNA. The polypeptide is Small ribosomal subunit protein bS20 (Porphyromonas gingivalis (strain ATCC 33277 / DSM 20709 / CIP 103683 / JCM 12257 / NCTC 11834 / 2561)).